Consider the following 310-residue polypeptide: Ribosomal RNA small subunit methyltransferase H (310 aa).

S-adenosyl-L-methionine-binding positions include 32–34 (GGH), D52, F79, D100, and Q107.

This sequence belongs to the methyltransferase superfamily. RsmH family.

It is found in the cytoplasm. The catalysed reaction is cytidine(1402) in 16S rRNA + S-adenosyl-L-methionine = N(4)-methylcytidine(1402) in 16S rRNA + S-adenosyl-L-homocysteine + H(+). Functionally, specifically methylates the N4 position of cytidine in position 1402 (C1402) of 16S rRNA. The chain is Ribosomal RNA small subunit methyltransferase H from Bacillus cytotoxicus (strain DSM 22905 / CIP 110041 / 391-98 / NVH 391-98).